Here is a 1256-residue protein sequence, read N- to C-terminus: Bifunctional autolysin (1256 aa).

A signal peptide spans 1 to 29; it reads MAKKFNYKLPSMVALTLVGSAVTAHQVQA. Over residues 103-138 the composition is skewed to polar residues; sequence GDTRANQSATTNNTQPVAKSTSTTAPKTNTNVTNAG. Disordered stretches follow at residues 103–151, 173–219, and 419–440; these read GDTR…NSEN, AAAP…KYKP, and TQST…PSTG. Low complexity-rich tracts occupy residues 173 to 196 and 421 to 439; these read AAAP…KVTT and STTT…KPST. Positions 199–775 are N-acetylmuramoyl-L-alanine amidase; that stretch reads ASAQPRSVAA…AVAQPKTAVK (577 aa). 7 consecutive GW domains span residues 443–517, 519–593, 612–686, 688–762, 784–859, 861–936, and 943–1017; these read TVAA…YNTA, SPVN…DTAK, TVSS…YNNA, SPVN…VPAA, TTQT…VQNL, KEVK…APTA, and AAKD…KELI. The endo-beta-N-acetylglucosaminidase stretch occupies residues 776–1256; the sequence is AYTVTKPQTT…GKYFDIPQYK (481 aa).

This sequence in the N-terminal section; belongs to the N-acetylmuramoyl-L-alanine amidase 2 family. The protein in the C-terminal section; belongs to the glycosyl hydrolase 73 family. In terms of assembly, oligomer; forms a ring structure at the cell surface which is important for efficient partitioning of daughter cells after cell division. Post-translationally, undergoes proteolytic processing to generate the two extracellular lytic enzymes, probably at the septal region on the cell surface.

The protein resides in the secreted. The catalysed reaction is Hydrolyzes the link between N-acetylmuramoyl residues and L-amino acid residues in certain cell-wall glycopeptides.. The enzyme catalyses an N(4)-(oligosaccharide-(1-&gt;3)-[oligosaccharide-(1-&gt;6)]-beta-D-Man-(1-&gt;4)-beta-D-GlcNAc-(1-&gt;4)-alpha-D-GlcNAc)-L-asparaginyl-[protein] + H2O = an oligosaccharide-(1-&gt;3)-[oligosaccharide-(1-&gt;6)]-beta-D-Man-(1-&gt;4)-D-GlcNAc + N(4)-(N-acetyl-beta-D-glucosaminyl)-L-asparaginyl-[protein]. Functionally, endohydrolysis of the di-N-acetylchitobiosyl unit in high-mannose glycopeptides and glycoproteins containing the -[(Man)5(GlcNAc)2]-Asn structure. One N-acetyl-D-glucosamine residue remains attached to the protein; the rest of the oligosaccharide is released intact. Cleaves the peptidoglycan connecting the daughter cells at the end of the cell division cycle, resulting in the separation of the two newly divided cells. Acts as an autolysin in penicillin-induced lysis. The chain is Bifunctional autolysin (atl) from Staphylococcus aureus (strain MW2).